A 98-amino-acid chain; its full sequence is NADH-ubiquinone oxidoreductase chain 4L (98 aa).

A run of 3 helical transmembrane segments spans residues 2–22 (TSAF…TFMF), 26–46 (LMST…MTST), and 59–79 (IPIT…ALLV).

It belongs to the complex I subunit 4L family. In terms of assembly, core subunit of respiratory chain NADH dehydrogenase (Complex I) which is composed of 45 different subunits.

Its subcellular location is the mitochondrion inner membrane. The catalysed reaction is a ubiquinone + NADH + 5 H(+)(in) = a ubiquinol + NAD(+) + 4 H(+)(out). In terms of biological role, core subunit of the mitochondrial membrane respiratory chain NADH dehydrogenase (Complex I) which catalyzes electron transfer from NADH through the respiratory chain, using ubiquinone as an electron acceptor. Part of the enzyme membrane arm which is embedded in the lipid bilayer and involved in proton translocation. This is NADH-ubiquinone oxidoreductase chain 4L from Rattus norvegicus (Rat).